The following is a 269-amino-acid chain: Ubiquinone/menaquinone biosynthesis C-methyltransferase UbiE (269 aa).

S-adenosyl-L-methionine-binding positions include Thr92, Asp113, and 141 to 142 (NA).

The protein belongs to the class I-like SAM-binding methyltransferase superfamily. MenG/UbiE family.

The catalysed reaction is a 2-demethylmenaquinol + S-adenosyl-L-methionine = a menaquinol + S-adenosyl-L-homocysteine + H(+). It catalyses the reaction a 2-methoxy-6-(all-trans-polyprenyl)benzene-1,4-diol + S-adenosyl-L-methionine = a 5-methoxy-2-methyl-3-(all-trans-polyprenyl)benzene-1,4-diol + S-adenosyl-L-homocysteine + H(+). Its pathway is quinol/quinone metabolism; menaquinone biosynthesis; menaquinol from 1,4-dihydroxy-2-naphthoate: step 2/2. It participates in cofactor biosynthesis; ubiquinone biosynthesis. Its function is as follows. Methyltransferase required for the conversion of demethylmenaquinol (DMKH2) to menaquinol (MKH2) and the conversion of 2-polyprenyl-6-methoxy-1,4-benzoquinol (DDMQH2) to 2-polyprenyl-3-methyl-6-methoxy-1,4-benzoquinol (DMQH2). The protein is Ubiquinone/menaquinone biosynthesis C-methyltransferase UbiE of Brucella suis biovar 1 (strain 1330).